Consider the following 436-residue polypeptide: 3-ketoacyl-CoA thiolase (436 aa).

Cysteine 99 serves as the catalytic Acyl-thioester intermediate. Active-site proton acceptor residues include histidine 392 and cysteine 422.

Belongs to the thiolase-like superfamily. Thiolase family. Heterotetramer of two alpha chains (FadJ) and two beta chains (FadI).

The protein localises to the cytoplasm. The catalysed reaction is an acyl-CoA + acetyl-CoA = a 3-oxoacyl-CoA + CoA. It functions in the pathway lipid metabolism; fatty acid beta-oxidation. In terms of biological role, catalyzes the final step of fatty acid oxidation in which acetyl-CoA is released and the CoA ester of a fatty acid two carbons shorter is formed. This Shewanella piezotolerans (strain WP3 / JCM 13877) protein is 3-ketoacyl-CoA thiolase.